The primary structure comprises 232 residues: Ribose-5-phosphate isomerase A (232 aa).

Residues 29–32 (SGST), 86–89 (DGAD), and 99–102 (KGGG) each bind substrate. Catalysis depends on E108, which acts as the Proton acceptor. K126 provides a ligand contact to substrate.

This sequence belongs to the ribose 5-phosphate isomerase family. As to quaternary structure, homodimer.

It carries out the reaction aldehydo-D-ribose 5-phosphate = D-ribulose 5-phosphate. Its pathway is carbohydrate degradation; pentose phosphate pathway; D-ribose 5-phosphate from D-ribulose 5-phosphate (non-oxidative stage): step 1/1. In terms of biological role, catalyzes the reversible conversion of ribose-5-phosphate to ribulose 5-phosphate. This is Ribose-5-phosphate isomerase A from Synechococcus sp. (strain ATCC 27144 / PCC 6301 / SAUG 1402/1) (Anacystis nidulans).